A 362-amino-acid polypeptide reads, in one-letter code: Outer membrane porin F (362 aa).

Positions 1-22 are cleaved as a signal peptide; the sequence is MMKRNILAVIVPALLVAGTANA. The chain crosses the membrane as a beta stranded span at residues 23–28; that stretch reads AEIYNK. Position 29 (D29) is a topological domain, periplasmic. A beta stranded transmembrane segment spans residues 30 to 45; that stretch reads GNKVDLYGKAVGLHYF. At 46–60 the chain is on the extracellular side; it reads SKGNGENSYGGNGDM. The beta stranded transmembrane segment at 61–73 threads the bilayer; it reads TYARLGFKGETQI. Residues 74 to 75 lie on the Periplasmic side of the membrane; that stretch reads NS. The chain crosses the membrane as a beta stranded span at residues 76–88; it reads DLTGYGQWEYNFQ. At 89 to 104 the chain is on the extracellular side; that stretch reads GNNSEGADAQTGNKTR. A beta stranded transmembrane segment spans residues 105 to 113; sequence LAFAGLKYA. The Periplasmic segment spans residues 114 to 115; the sequence is DV. Residues 116 to 122 form a beta stranded membrane-spanning segment; it reads GSFDYGR. Residues 123–156 lie on the Extracellular side of the membrane; sequence NYGVVYDALGYTDMLPEFGGDTAYSDDFFVGRVG. The beta stranded transmembrane segment at 157–163 threads the bilayer; the sequence is GVATYRN. Residues 164 to 171 are Periplasmic-facing; that stretch reads SNFFGLVD. Residues 172–181 traverse the membrane as a beta stranded segment; that stretch reads GLNFAVQYLG. Residues 182-193 lie on the Extracellular side of the membrane; sequence KNERDTARRSNG. Residues 194–204 traverse the membrane as a beta stranded segment; the sequence is DGVGGSISYEY. A topological domain (periplasmic) is located at residue E205. Residues 206–217 traverse the membrane as a beta stranded segment; sequence GFGIVGAYGAAD. Over 218-232 the chain is Extracellular; that stretch reads RTNLQEAQPLGNGKK. Residues 233–244 traverse the membrane as a beta stranded segment; it reads AEQWATGLKYDA. N245 is a topological domain (periplasmic). A beta stranded membrane pass occupies residues 246 to 257; it reads NIYLAANYGETR. The Extracellular segment spans residues 258–274; it reads NATPITNKFTNTSGFAN. The chain crosses the membrane as a beta stranded span at residues 275–287; sequence KTQDVLLVAQYQF. The Periplasmic segment spans residues 288 to 289; that stretch reads DF. Residues 290 to 303 form a beta stranded membrane-spanning segment; that stretch reads GLRPSIAYTKSKAK. Over 304–313 the chain is Extracellular; the sequence is DVEGIGDVDL. The beta stranded transmembrane segment at 314–325 threads the bilayer; sequence VNYFEVGATYYF. Residues 326–327 are Periplasmic-facing; that stretch reads NK. Residues 328–337 traverse the membrane as a beta stranded segment; the sequence is NMSTYVDYII. The Extracellular portion of the chain corresponds to 338–352; the sequence is NQIDSDNKLGVGSDD. The chain crosses the membrane as a beta stranded span at residues 353 to 362; the sequence is TVAVGIVYQF.

This sequence belongs to the Gram-negative porin family. As to quaternary structure, homotrimer. Forms mixed heterotrimers with OmpC and with PhoE; other mixed heterotrimers are also probable. In terms of assembly, (Microbial infection) Trimeric complexes with colicin E3, BtuB and OmpF can be cross-linked and immunoprecipitated.

The protein resides in the cell outer membrane. Functionally, forms pores that allow passive diffusion of small molecules across the outer membrane. (Microbial infection) It is also a receptor for the bacteriophage T2. Is the major receptor for colicin E5. In terms of biological role, (Microbial infection) Probably translocates colicin E3 (and other A-type colicins) across the outer membrane. Its function is as follows. (Microbial infection) A mixed OmpC-OmpF heterotrimer is the outer membrane receptor for toxin CdiA-EC536 (ECL_04451); polymorphisms in extracellular loops 4 and 5 of OmpC confer susceptibility to CdiA-EC536-mediated toxicity. This Escherichia coli (strain K12) protein is Outer membrane porin F (ompF).